Reading from the N-terminus, the 581-residue chain is Jasmonoyl--L-amino acid synthetase GH3.5 (581 aa).

Residue S92 participates in ATP binding. S95 contacts jasmonate. ATP contacts are provided by residues T115, N161, and 324-329; that span reads GASEGW. 159-163 is an an L-alpha-amino acid binding site; it reads TTNLY. Jasmonate contacts are provided by residues 321-324 and S326; that span reads ADYG. 534-538 lines the an L-alpha-amino acid pocket; sequence EILDH. Position 561 (K561) interacts with ATP.

Belongs to the IAA-amido conjugating enzyme family. In terms of tissue distribution, expressed in green shoots, roots and flowers.

It catalyses the reaction a jasmonate + an L-alpha-amino acid + ATP = a jasmonyl-L-amino acid + AMP + diphosphate + H(+). Catalyzes the synthesis of jasmonate-amino acid conjugates by adenylation. Catalyzes the conjugation of jasmonate (JA) to Ile when expressed in a heterologous system (E.coli). Catalyzes in vitro the conjugation of jasmonate (JA) to Ile, Phe, Cys, Leu, Met, Ala, Val and Trp. Involved in the production of JA-Ile in response to infection by the rice blast fungus Magnaporthe oryzae. Required for the accumulation of the flavonoid phytoalexin sakuranetin in response to infection by the rice blast fungus. Involved in herbivory-induced JA-Ile accumulation. Involved in the production of JA-Ile in response to wounding. Required for modulation of light and JA signaling in photomorphogenesis. Required for normal seed development. Required for optimal flower opening and closing and anther dehiscence. May catalyze the synthesis of indole-3-acetic acid (IAA)-amino acid conjugates, providing a mechanism for the plant to cope with the presence of excess auxin. This is Jasmonoyl--L-amino acid synthetase GH3.5 from Oryza sativa subsp. japonica (Rice).